The primary structure comprises 351 residues: S-adenosylmethionine:tRNA ribosyltransferase-isomerase (351 aa).

It belongs to the QueA family. As to quaternary structure, monomer.

Its subcellular location is the cytoplasm. The catalysed reaction is 7-aminomethyl-7-carbaguanosine(34) in tRNA + S-adenosyl-L-methionine = epoxyqueuosine(34) in tRNA + adenine + L-methionine + 2 H(+). Its pathway is tRNA modification; tRNA-queuosine biosynthesis. In terms of biological role, transfers and isomerizes the ribose moiety from AdoMet to the 7-aminomethyl group of 7-deazaguanine (preQ1-tRNA) to give epoxyqueuosine (oQ-tRNA). The sequence is that of S-adenosylmethionine:tRNA ribosyltransferase-isomerase from Idiomarina loihiensis (strain ATCC BAA-735 / DSM 15497 / L2-TR).